Consider the following 383-residue polypeptide: Lipid-A-disaccharide synthase (383 aa).

The protein belongs to the LpxB family.

It catalyses the reaction a lipid X + a UDP-2-N,3-O-bis[(3R)-3-hydroxyacyl]-alpha-D-glucosamine = a lipid A disaccharide + UDP + H(+). Its pathway is bacterial outer membrane biogenesis; LPS lipid A biosynthesis. Functionally, condensation of UDP-2,3-diacylglucosamine and 2,3-diacylglucosamine-1-phosphate to form lipid A disaccharide, a precursor of lipid A, a phosphorylated glycolipid that anchors the lipopolysaccharide to the outer membrane of the cell. This Anaeromyxobacter dehalogenans (strain 2CP-C) protein is Lipid-A-disaccharide synthase.